The following is a 174-amino-acid chain: uncharacterized protein (174 aa).

Residues 42–174 form the N-acetyltransferase domain; the sequence is SNTKNINLYE…GVKGMFWYPR (133 aa).

The protein belongs to the acetyltransferase family. Ycf52 subfamily.

Its subcellular location is the plastid. The protein localises to the chloroplast. This is an uncharacterized protein from Porphyra purpurea (Red seaweed).